Here is a 231-residue protein sequence, read N- to C-terminus: Sec-independent protein translocase protein TatB (231 aa).

The helical transmembrane segment at 1-21 threads the bilayer; that stretch reads MFDIGFSELLLFGVIALIVLG. The segment at 77–168 is disordered; that stretch reads MRREMAEMRG…SLKTDFNDNA (92 aa). Over residues 101–111 the composition is skewed to basic and acidic residues; sequence ASRDLVDDAKP. A compositionally biased stretch (polar residues) spans 148 to 157; it reads SEQPSAQGDN.

It belongs to the TatB family. As to quaternary structure, the Tat system comprises two distinct complexes: a TatABC complex, containing multiple copies of TatA, TatB and TatC subunits, and a separate TatA complex, containing only TatA subunits. Substrates initially bind to the TatABC complex, which probably triggers association of the separate TatA complex to form the active translocon.

The protein localises to the cell inner membrane. Functionally, part of the twin-arginine translocation (Tat) system that transports large folded proteins containing a characteristic twin-arginine motif in their signal peptide across membranes. Together with TatC, TatB is part of a receptor directly interacting with Tat signal peptides. TatB may form an oligomeric binding site that transiently accommodates folded Tat precursor proteins before their translocation. This chain is Sec-independent protein translocase protein TatB, found in Psychrobacter cryohalolentis (strain ATCC BAA-1226 / DSM 17306 / VKM B-2378 / K5).